The sequence spans 191 residues: Adenylate kinase (191 aa).

ATP is bound at residue 9-17 (GVPGVGATT).

The protein belongs to the archaeal adenylate kinase family.

The protein resides in the cytoplasm. The catalysed reaction is AMP + ATP = 2 ADP. This is Adenylate kinase from Methanopyrus kandleri (strain AV19 / DSM 6324 / JCM 9639 / NBRC 100938).